The chain runs to 234 residues: Small ribosomal subunit protein uS3 (234 aa).

The region spanning 39 to 109 is the KH type-2 domain; sequence IRTLINKHYG…EVRIAIYEVK (71 aa).

The protein belongs to the universal ribosomal protein uS3 family. In terms of assembly, part of the 30S ribosomal subunit. Forms a tight complex with proteins S10 and S14.

In terms of biological role, binds the lower part of the 30S subunit head. Binds mRNA in the 70S ribosome, positioning it for translation. The protein is Small ribosomal subunit protein uS3 of Coprothermobacter proteolyticus (strain ATCC 35245 / DSM 5265 / OCM 4 / BT).